The following is a 444-amino-acid chain: Cop9 signalosome complex subunit 11 (444 aa).

The region spanning 195–367 is the PCI domain; the sequence is FFTMMTSEPL…IHFEDSSILQ (173 aa). Positions 419 to 439 are disordered; the sequence is SSDDMDIDEVNDRSDISDSEG.

In terms of assembly, component of a COP9 signalosome-like (CSN) complex, composed of RRI1/CSN5, CSN9, RRI2/CSN10, PCI8/CSN11, CSN12 and CSI1. Interacts with PRT1 and RPG1, 2 subunits of the core complex of translation initiation factor 3 (eIF3).

It is found in the cytoplasm. The protein resides in the nucleus. Functionally, component of the COP9 signalosome (CSN) complex that acts as an regulator of the ubiquitin (Ubl) conjugation pathway by mediating the deneddylation of the cullin subunit of SCF-type E3 ubiquitin-protein ligase complexes The CSN complex is involved in the regulation of the mating pheromone response. PCI8 may also be involved in transcriptional and translational control. The sequence is that of Cop9 signalosome complex subunit 11 (PCI8) from Saccharomyces cerevisiae (strain ATCC 204508 / S288c) (Baker's yeast).